Consider the following 39-residue polypeptide: Cytochrome b559 subunit beta (39 aa).

The helical transmembrane segment at 14–30 (WLAVHGLAIPTVSFLGS) threads the bilayer. A heme-binding site is contributed by H18.

Belongs to the PsbE/PsbF family. As to quaternary structure, heterodimer of an alpha subunit and a beta subunit. PSII is composed of 1 copy each of membrane proteins PsbA, PsbB, PsbC, PsbD, PsbE, PsbF, PsbH, PsbI, PsbJ, PsbK, PsbL, PsbM, PsbT, PsbX, PsbY, PsbZ, Psb30/Ycf12, at least 3 peripheral proteins of the oxygen-evolving complex and a large number of cofactors. It forms dimeric complexes. Heme b is required as a cofactor.

It localises to the plastid. Its subcellular location is the chloroplast thylakoid membrane. Its function is as follows. This b-type cytochrome is tightly associated with the reaction center of photosystem II (PSII). PSII is a light-driven water:plastoquinone oxidoreductase that uses light energy to abstract electrons from H(2)O, generating O(2) and a proton gradient subsequently used for ATP formation. It consists of a core antenna complex that captures photons, and an electron transfer chain that converts photonic excitation into a charge separation. This Beta vulgaris (Sugar beet) protein is Cytochrome b559 subunit beta.